A 1187-amino-acid chain; its full sequence is DNA-directed RNA polymerase subunit beta (1187 aa).

Residues 1150-1187 (KDEDDDPASSADDLGFNIGARPDAAAKEDQKAEEPEYQ) are disordered. Positions 1173-1187 (AAAKEDQKAEEPEYQ) are enriched in basic and acidic residues.

It belongs to the RNA polymerase beta chain family. The RNAP catalytic core consists of 2 alpha, 1 beta, 1 beta' and 1 omega subunit. When a sigma factor is associated with the core the holoenzyme is formed, which can initiate transcription.

The catalysed reaction is RNA(n) + a ribonucleoside 5'-triphosphate = RNA(n+1) + diphosphate. Its function is as follows. DNA-dependent RNA polymerase catalyzes the transcription of DNA into RNA using the four ribonucleoside triphosphates as substrates. This chain is DNA-directed RNA polymerase subunit beta, found in Bifidobacterium longum (strain NCC 2705).